A 269-amino-acid chain; its full sequence is 4-hydroxy-tetrahydrodipicolinate reductase (269 aa).

Residues 10-15 (GANGRM), E36, 99-101 (GTT), and 123-126 (AANF) each bind NAD(+). H156 serves as the catalytic Proton donor/acceptor. H157 serves as a coordination point for (S)-2,3,4,5-tetrahydrodipicolinate. K160 functions as the Proton donor in the catalytic mechanism. 166–167 (GT) is a (S)-2,3,4,5-tetrahydrodipicolinate binding site.

This sequence belongs to the DapB family.

It localises to the cytoplasm. The enzyme catalyses (S)-2,3,4,5-tetrahydrodipicolinate + NAD(+) + H2O = (2S,4S)-4-hydroxy-2,3,4,5-tetrahydrodipicolinate + NADH + H(+). The catalysed reaction is (S)-2,3,4,5-tetrahydrodipicolinate + NADP(+) + H2O = (2S,4S)-4-hydroxy-2,3,4,5-tetrahydrodipicolinate + NADPH + H(+). Its pathway is amino-acid biosynthesis; L-lysine biosynthesis via DAP pathway; (S)-tetrahydrodipicolinate from L-aspartate: step 4/4. Its function is as follows. Catalyzes the conversion of 4-hydroxy-tetrahydrodipicolinate (HTPA) to tetrahydrodipicolinate. This chain is 4-hydroxy-tetrahydrodipicolinate reductase, found in Neisseria meningitidis serogroup A / serotype 4A (strain DSM 15465 / Z2491).